The primary structure comprises 403 residues: Coenzyme A biosynthesis bifunctional protein CoaBC (403 aa).

The phosphopantothenoylcysteine decarboxylase stretch occupies residues 1–197; the sequence is MISEIMHPTK…GNNLKKEGNR (197 aa). Residues 198 to 403 are phosphopantothenate--cysteine ligase; the sequence is VLILNGGTVE…VEKVKKLVKS (206 aa). CTP is bound by residues aspartate 285, lysine 294, and phenylalanine 327.

The protein in the N-terminal section; belongs to the HFCD (homo-oligomeric flavin containing Cys decarboxylase) superfamily. This sequence in the C-terminal section; belongs to the PPC synthetase family. Homododecamer. The CoaC domain is responsible for dodecamer formation. It depends on Mg(2+) as a cofactor. Requires FMN as cofactor.

It catalyses the reaction N-[(R)-4-phosphopantothenoyl]-L-cysteine + H(+) = (R)-4'-phosphopantetheine + CO2. It carries out the reaction (R)-4'-phosphopantothenate + L-cysteine + CTP = N-[(R)-4-phosphopantothenoyl]-L-cysteine + CMP + diphosphate + H(+). The protein operates within cofactor biosynthesis; coenzyme A biosynthesis. In terms of biological role, catalyzes two sequential steps in the biosynthesis of coenzyme A. In the first step cysteine is conjugated to 4'-phosphopantothenate to form 4-phosphopantothenoylcysteine. In the second step the latter compound is decarboxylated to form 4'-phosphopantotheine. The polypeptide is Coenzyme A biosynthesis bifunctional protein CoaBC (Methanocaldococcus jannaschii (strain ATCC 43067 / DSM 2661 / JAL-1 / JCM 10045 / NBRC 100440) (Methanococcus jannaschii)).